We begin with the raw amino-acid sequence, 238 residues long: Purine nucleoside phosphorylase DeoD-type (238 aa).

His4 is a binding site for a purine D-ribonucleoside. Residues Gly20, Arg24, Arg43, and 87-90 (RVGS) each bind phosphate. A purine D-ribonucleoside contacts are provided by residues 179–181 (EME) and 203–204 (SD). Asp204 functions as the Proton donor in the catalytic mechanism.

Belongs to the PNP/UDP phosphorylase family. Homohexamer; trimer of homodimers.

The catalysed reaction is a purine D-ribonucleoside + phosphate = a purine nucleobase + alpha-D-ribose 1-phosphate. The enzyme catalyses a purine 2'-deoxy-D-ribonucleoside + phosphate = a purine nucleobase + 2-deoxy-alpha-D-ribose 1-phosphate. Functionally, catalyzes the reversible phosphorolytic breakdown of the N-glycosidic bond in the beta-(deoxy)ribonucleoside molecules, with the formation of the corresponding free purine bases and pentose-1-phosphate. The protein is Purine nucleoside phosphorylase DeoD-type of Histophilus somni (strain 129Pt) (Haemophilus somnus).